A 416-amino-acid polypeptide reads, in one-letter code: Putative competence-damage inducible protein (416 aa).

It belongs to the CinA family.

The polypeptide is Putative competence-damage inducible protein (Bacillus pumilus (strain SAFR-032)).